A 631-amino-acid polypeptide reads, in one-letter code: Peptidyl-prolyl cis-trans isomerase CYP71 (631 aa).

The segment at Val26–Arg45 is disordered. WD repeat units follow at residues Met68–Ala106, Ser111–Met150, Ile201–Asp240, and Lys257–Tyr297. In terms of domain architecture, PPIase cyclophilin-type spans Leu474–Val628.

It belongs to the cyclophilin-type PPIase family. In terms of assembly, interacts with FAS1 and LHP1. Interacts (via WD repeat domain) with histone H3. Ubiquitous. Expressed in the meristems.

The protein localises to the nucleus. The catalysed reaction is [protein]-peptidylproline (omega=180) = [protein]-peptidylproline (omega=0). In terms of biological role, PPIases accelerate the folding of proteins. It catalyzes the cis-trans isomerization of proline imidic peptide bonds in oligopeptides. Histone proline isomerase that increases the rate of cis-trans isomerization of the synthetic histone H3 peptides H3P30 (RKSAP30F-p-nitroanilide) and H3P30K27me3 (RKme3-SAP30F-p-nitroanilide) in the histone H3 N-terminal tail, in vitro. Histone remodeling factor involved in chromatin-based gene silencing. Reinforces H3K27 methylation. Involved in fundamental processes of chromatin assembly and histone modification by mediating the targeting of FAS1 and LHP1 on the chromatin. Required for the formation and development of leaves, for normal phyllotaxy and for the formation, maintenance and activity of root and shoot apical meristems. The protein is Peptidyl-prolyl cis-trans isomerase CYP71 of Arabidopsis thaliana (Mouse-ear cress).